The following is a 593-amino-acid chain: MTADNALYIPPYKADDQDVVVELNTHFGAEAFTAQPTRTGMPVLWVERARLFEILTFLRNVPKPYSMLYDLHGVDERLRTNRRGLPGADFTVFYHLLSIERNSDVMIKVALSESDLSVPTITSIWPNANWYEREVWDMFGIDFPGHPHLSRIMMPPTWEGHPLRKDFPARATELDPYSLTLAKQQLEEEAARFRPEDWGMKRSGANEDYMFLNLGPNHPSAHGAFRIILQLDGEEIVDCVPDIGYHHRGAEKMAERQSWHSFIPYTDRIDYLGGVMNNLPYVLSVEKLAGIKVPEKVDVIRIMMAEFFRITSHLLFLGTYIQDVGAMTPVFFTFTDRQKAYTVIEAITGFRLHPAWYRIGGVAHDLPRGWEKLVKDFVDWLPKRLDEYTKAALQNSILKGRTVGVAAYNTKEALEWGVTGAGLRSTGCDFDLRKARPYSGYENFEFEVPLAANGDAYDRCMVRVEEMRQSIKIIDQCMRNMPEGPYKADHPLTTPPPKERTLQHIETLITHFLQVSWGPVMPANESFQMIEATKGINSYYLTSDGGTMSYRTRIRTPSYPHLQQIPSVIKGSMVADLIAYLGSIDFVMADVDR.

An NADH dehydrogenase I subunit C region spans residues 1–184 (MTADNALYIP…DPYSLTLAKQ (184 aa)). The tract at residues 208–593 (DYMFLNLGPN…IDFVMADVDR (386 aa)) is NADH dehydrogenase I subunit D.

In the N-terminal section; belongs to the complex I 30 kDa subunit family. This sequence in the C-terminal section; belongs to the complex I 49 kDa subunit family. As to quaternary structure, NDH-1 is composed of 13 different subunits. Subunits NuoB, CD, E, F, and G constitute the peripheral sector of the complex.

It localises to the cell inner membrane. It catalyses the reaction a quinone + NADH + 5 H(+)(in) = a quinol + NAD(+) + 4 H(+)(out). NDH-1 shuttles electrons from NADH, via FMN and iron-sulfur (Fe-S) centers, to quinones in the respiratory chain. The immediate electron acceptor for the enzyme in this species is believed to be ubiquinone. Couples the redox reaction to proton translocation (for every two electrons transferred, four hydrogen ions are translocated across the cytoplasmic membrane), and thus conserves the redox energy in a proton gradient. This chain is NADH-quinone oxidoreductase subunit C/D, found in Pseudomonas savastanoi pv. phaseolicola (strain 1448A / Race 6) (Pseudomonas syringae pv. phaseolicola (strain 1448A / Race 6)).